Here is a 455-residue protein sequence, read N- to C-terminus: E3 ubiquitin-protein ligase IPI1 (455 aa).

The disordered stretch occupies residues 1-42 (MGAEEEEEPASAVGREGGGGGGGARAAGAGAGGDTADDDDSG). Residues 15 to 33 (REGGGGGGGARAAGAGAGG) show a composition bias toward gly residues. The RING-type; atypical zinc finger occupies 51-97 (CSICLDAVVAGGGDRSTARLQCGHEFHLDCIGSAFNAKGVMQCPNCR). Disordered regions lie at residues 286–311 (LDSDSQQRGSLPSVYGNGSGSRSRIP) and 426–455 (QWIGAGRSPPPPPPPPADNSSYRQMHIPRM). A compositionally biased stretch (pro residues) spans 433–442 (SPPPPPPPPA).

As to quaternary structure, interacts with SPL14/IPA1.

It localises to the nucleus. It catalyses the reaction S-ubiquitinyl-[E2 ubiquitin-conjugating enzyme]-L-cysteine + [acceptor protein]-L-lysine = [E2 ubiquitin-conjugating enzyme]-L-cysteine + N(6)-ubiquitinyl-[acceptor protein]-L-lysine.. The protein operates within protein modification; protein ubiquitination. Functions as an E3 ligase that promotes polyubiquitination of SPL14/IPA1 for subsequent proteasomal degradation. Regulates plant architecture by modulating SPL14/IPA1 abundance. Promotes the degradation of SPL14/IPA1 in panicles, while it stabilizes SPL14/IPA1 in shoot apices. Ubiquitinates the SPL14/IPA1-mediated complex with 'Lys-48'-linked polyubiquitin in panicles and 'Lys-63'-linked polyubiquitin chains in the shoot apex. The polypeptide is E3 ubiquitin-protein ligase IPI1 (Oryza sativa subsp. japonica (Rice)).